A 242-amino-acid chain; its full sequence is Hairy and enhancer of split-related protein HELT (242 aa).

The bHLH domain occupies 10 to 65 (RTPVSHKVIEKRRRDRINRCLNELGKTVPMALAKQSSGKLEKAEILEMTVQYLRAL). Residue Lys48 is modified to N6-acetyllysine. An Orange domain is found at 87–122 (FHYGYHECMKNLVHYLTTVERMETKDTKYARILAFL).

Belongs to the HEY family. In terms of assembly, self-associates. Interacts with HES5 and HEY2.

Its subcellular location is the nucleus. Transcriptional repressor which binds preferentially to the canonical E box sequence 5'-CACGCG-3'. The chain is Hairy and enhancer of split-related protein HELT (HELT) from Homo sapiens (Human).